The chain runs to 734 residues: Ribosomal RNA large subunit methyltransferase K/L (734 aa).

Residues His49–Leu167 enclose the THUMP domain.

It belongs to the methyltransferase superfamily. RlmKL family.

Its subcellular location is the cytoplasm. It carries out the reaction guanosine(2445) in 23S rRNA + S-adenosyl-L-methionine = N(2)-methylguanosine(2445) in 23S rRNA + S-adenosyl-L-homocysteine + H(+). The catalysed reaction is guanosine(2069) in 23S rRNA + S-adenosyl-L-methionine = N(2)-methylguanosine(2069) in 23S rRNA + S-adenosyl-L-homocysteine + H(+). Functionally, specifically methylates the guanine in position 2445 (m2G2445) and the guanine in position 2069 (m7G2069) of 23S rRNA. This Acinetobacter baumannii (strain SDF) protein is Ribosomal RNA large subunit methyltransferase K/L.